Reading from the N-terminus, the 184-residue chain is UPF0397 protein SAS2570 (184 aa).

Transmembrane regions (helical) follow at residues 11 to 31 (VVAI…VVIP), 44 to 64 (AFLA…TGLV), 77 to 97 (AWWS…WIGL), 111 to 131 (MIYF…LIAP), and 148 to 168 (QGVI…TILL).

The protein belongs to the UPF0397 family.

Its subcellular location is the cell membrane. This is UPF0397 protein SAS2570 from Staphylococcus aureus (strain MSSA476).